Reading from the N-terminus, the 532-residue chain is Egg peptide speract receptor (532 aa).

The N-terminal stretch at 1-30 (MGLPMMLQQYCWAACLVICIAISSVDDVGA) is a signal peptide. Residues 31–491 (EQNYGREAVE…VVCEGSTAPP (461 aa)) are Extracellular-facing. 4 consecutive SRCR domains span residues 43-144 (IRLI…VECL), 153-257 (LRMI…VVCK), 264-366 (IRLM…VVCA), and 382-485 (VRIV…VVCE). Cystine bridges form between Cys-68/Cys-133, Cys-81/Cys-143, Cys-112/Cys-122, Cys-178/Cys-244, Cys-191/Cys-256, Cys-223/Cys-233, Cys-289/Cys-355, Cys-302/Cys-365, Cys-335/Cys-345, Cys-406/Cys-475, Cys-419/Cys-484, and Cys-454/Cys-465. 2 N-linked (GlcNAc...) asparagine glycosylation sites follow: Asn-78 and Asn-115. Asn-459 carries N-linked (GlcNAc...) asparagine glycosylation. Residues 492-520 (SGMSIAVIGGAAGGGVAGLAVAAFAFYYI) traverse the membrane as a helical segment. The Cytoplasmic segment spans residues 521-532 (KFVKPAGGGGQA).

The protein localises to the membrane. Its function is as follows. Receptor for the egg peptide speract. This is Egg peptide speract receptor from Strongylocentrotus purpuratus (Purple sea urchin).